Reading from the N-terminus, the 816-residue chain is Phenylalanine--tRNA ligase beta subunit (816 aa).

The tRNA-binding domain occupies Phe40 to Ile148. Residues Lys401–Thr479 form the B5 domain. Mg(2+)-binding residues include Asp457, Asp463, Glu466, and Glu467. One can recognise an FDX-ACB domain in the interval Pro721 to Arg814.

Belongs to the phenylalanyl-tRNA synthetase beta subunit family. Type 1 subfamily. As to quaternary structure, tetramer of two alpha and two beta subunits. The cofactor is Mg(2+).

It is found in the cytoplasm. It catalyses the reaction tRNA(Phe) + L-phenylalanine + ATP = L-phenylalanyl-tRNA(Phe) + AMP + diphosphate + H(+). This chain is Phenylalanine--tRNA ligase beta subunit, found in Desulfotalea psychrophila (strain LSv54 / DSM 12343).